Here is a 194-residue protein sequence, read N- to C-terminus: MPKVGMREIRRAQLIDATLRSIDEAGLPGTTLASVAQRANISTGIVSHYFGDKDGLLEATMRHVLRDLWAATTQRRVAARKDPRSRLRAIVAANFDDTQVSAPVMKTWLAFWSQSMHDAMLKRLQHVNTRRLHSNLCAEFAKALPRAKARQAASGLAALIDGLWLRGALAGGPIDTRAALKLAHDYIDLLLASD.

The HTH tetR-type domain occupies 8 to 68 (EIRRAQLIDA…ATMRHVLRDL (61 aa)). The segment at residues 31–50 (TLASVAQRANISTGIVSHYF) is a DNA-binding region (H-T-H motif).

The protein operates within amine and polyamine biosynthesis; betaine biosynthesis via choline pathway [regulation]. Repressor involved in the biosynthesis of the osmoprotectant glycine betaine. It represses transcription of the choline transporter BetT and the genes of BetAB involved in the synthesis of glycine betaine. The sequence is that of HTH-type transcriptional regulator BetI from Burkholderia ambifaria (strain MC40-6).